The following is a 205-amino-acid chain: High frequency lysogenization protein HflD homolog (205 aa).

Belongs to the HflD family.

It localises to the cytoplasm. Its subcellular location is the cell inner membrane. The sequence is that of High frequency lysogenization protein HflD homolog from Vibrio parahaemolyticus serotype O3:K6 (strain RIMD 2210633).